Consider the following 115-residue polypeptide: Large ribosomal subunit protein bL20 (115 aa).

The protein belongs to the bacterial ribosomal protein bL20 family.

Binds directly to 23S ribosomal RNA and is necessary for the in vitro assembly process of the 50S ribosomal subunit. It is not involved in the protein synthesizing functions of that subunit. The chain is Large ribosomal subunit protein bL20 from Chlorobium phaeovibrioides (strain DSM 265 / 1930) (Prosthecochloris vibrioformis (strain DSM 265)).